Here is an 874-residue protein sequence, read N- to C-terminus: MFETTAKLRSAFLAYFETQGHQVVDSSSLVPHNDPTLLFTNAGMNQFKDVFLGMDKRSYSRAVSSQRCVRAGGKHNDLDNVGYTARHHTFFEMLGNFSFGDYFKEEAIRFAWTFLTETLKLPTERLCVTIYETDDEAFELWNKKIGVAAENIIRIGDNKGAPYASDNFWQMGDTGPCGPCSEIFYDHGDHIWGGRPGTPEEDGDRFIEIWNIVFMQYNRQADGAMLPLPKPSVDTGMGIERIAAIMQGVHSNYEIDIFKQLIAKTAEIIGVSDLENKSLRVIADHIRSCAFLIADGVMPSNEGRGYVLRRIIRRAVRHGNKLGATDTFFYKLVPTLISVMGDAAKGLVETQVIVEKALKAEEEQFARTLERGLGLLDNALNELSGKVLDGDTAFKLYDTYGFPVDLTADVCRERDITVDEAGFEAAMAEQRSRAQAAGNFGADYNKQLIIDEETQFCGYKGLSGEANVVALYLDGQAVNEVTQGQDAVVVLNNTPFYAESGGQVGDKGVLSAQGINFSVTDTQKFGQATGHQGKVLEGSIKVGTKLAAEVNKDLRQRTELNHSVTHLLHAALRQVIGTHVTQKGSLVNPERLRFDFAHFEGVKAAELKQVEELVNAQIRCNHELNTAEMAIDEAKEKGAMALFGEKYDEKVRVVTMGDFSIELCGGTHVGRTGDIGLFKITSEAGIAAGVRRIEAVTGAAAMAYVAEQQAMLDEAAGLLKSDSASVVAKLKAQLDKTKQLEKELSQLKDKLAAAASADMAGDAQDINGVKVLVKKLEGVDPGSLRGLQDELKQKLKSAIILLGTAKDGKVNLIAGVSNDLTAKVKAGELVAMVAQQVGGKGGGRPDMAQAGGTQVENLDAALASASTWIAERLA.

Positions 562, 566, 664, and 668 each coordinate Zn(2+).

This sequence belongs to the class-II aminoacyl-tRNA synthetase family. The cofactor is Zn(2+).

The protein resides in the cytoplasm. The catalysed reaction is tRNA(Ala) + L-alanine + ATP = L-alanyl-tRNA(Ala) + AMP + diphosphate. Its function is as follows. Catalyzes the attachment of alanine to tRNA(Ala) in a two-step reaction: alanine is first activated by ATP to form Ala-AMP and then transferred to the acceptor end of tRNA(Ala). Also edits incorrectly charged Ser-tRNA(Ala) and Gly-tRNA(Ala) via its editing domain. The protein is Alanine--tRNA ligase of Shewanella denitrificans (strain OS217 / ATCC BAA-1090 / DSM 15013).